Consider the following 148-residue polypeptide: 3-dehydroquinate dehydratase (148 aa).

Residue tyrosine 23 is the Proton acceptor of the active site. The substrate site is built by asparagine 74, histidine 80, and aspartate 87. Catalysis depends on histidine 100, which acts as the Proton donor. Substrate contacts are provided by residues 101 to 102 (IS) and arginine 111.

Belongs to the type-II 3-dehydroquinase family. Homododecamer.

It catalyses the reaction 3-dehydroquinate = 3-dehydroshikimate + H2O. It functions in the pathway metabolic intermediate biosynthesis; chorismate biosynthesis; chorismate from D-erythrose 4-phosphate and phosphoenolpyruvate: step 3/7. Functionally, catalyzes a trans-dehydration via an enolate intermediate. The chain is 3-dehydroquinate dehydratase from Thermoanaerobacter pseudethanolicus (strain ATCC 33223 / 39E) (Clostridium thermohydrosulfuricum).